Consider the following 438-residue polypeptide: uncharacterized protein (438 aa).

One can recognise an FAD-binding PCMH-type domain in the interval Ile-23–Ala-193. Residues Val-55 to Gly-59, His-60 to Ser-61, Gln-65, Asp-117, Thr-122, Ser-128 to Phe-132, Ile-183, Tyr-393, and Ala-430 to Tyr-433 each bind FAD. Position 60 is a pros-8alpha-FAD histidine (His-60).

Belongs to the oxygen-dependent FAD-linked oxidoreductase family. Requires FAD as cofactor.

The FAS-operon encodes genes involved in cytokinin production and in host plant fasciation (leafy gall). This is an uncharacterized protein from Rhodococcoides fascians (Rhodococcus fascians).